Consider the following 147-residue polypeptide: uncharacterized protein (147 aa).

To M.pneumoniae MPN_465.

This is an uncharacterized protein from Mycoplasma pneumoniae (strain ATCC 29342 / M129 / Subtype 1) (Mycoplasmoides pneumoniae).